Consider the following 139-residue polypeptide: D-ribose pyranase (139 aa).

H20 functions as the Proton donor in the catalytic mechanism. Residues D28, H106, and 128–130 (YAN) contribute to the substrate site.

The protein belongs to the RbsD / FucU family. RbsD subfamily. In terms of assembly, homodecamer.

The protein localises to the cytoplasm. The catalysed reaction is beta-D-ribopyranose = beta-D-ribofuranose. The protein operates within carbohydrate metabolism; D-ribose degradation; D-ribose 5-phosphate from beta-D-ribopyranose: step 1/2. Functionally, catalyzes the interconversion of beta-pyran and beta-furan forms of D-ribose. This Shewanella halifaxensis (strain HAW-EB4) protein is D-ribose pyranase.